Consider the following 503-residue polypeptide: ATP synthase subunit alpha (503 aa).

Residue 170–177 participates in ATP binding; the sequence is GDRQTGKT.

It belongs to the ATPase alpha/beta chains family. In terms of assembly, F-type ATPases have 2 components, CF(1) - the catalytic core - and CF(0) - the membrane proton channel. CF(1) has five subunits: alpha(3), beta(3), gamma(1), delta(1), epsilon(1). CF(0) has three main subunits: a(1), b(2) and c(9-12). The alpha and beta chains form an alternating ring which encloses part of the gamma chain. CF(1) is attached to CF(0) by a central stalk formed by the gamma and epsilon chains, while a peripheral stalk is formed by the delta and b chains.

It is found in the cell membrane. It carries out the reaction ATP + H2O + 4 H(+)(in) = ADP + phosphate + 5 H(+)(out). In terms of biological role, produces ATP from ADP in the presence of a proton gradient across the membrane. The alpha chain is a regulatory subunit. This is ATP synthase subunit alpha from Brevibacillus brevis (strain 47 / JCM 6285 / NBRC 100599).